A 448-amino-acid polypeptide reads, in one-letter code: Probable malate:quinone oxidoreductase (448 aa).

This sequence belongs to the MQO family. FAD serves as cofactor.

The catalysed reaction is (S)-malate + a quinone = a quinol + oxaloacetate. It participates in carbohydrate metabolism; tricarboxylic acid cycle; oxaloacetate from (S)-malate (quinone route): step 1/1. Catalyzes oxidation of malate to oxaloacetate in the citric acid cycle. Donates electrons to quinones of the electron transfer chain. The protein is Probable malate:quinone oxidoreductase (mqo) of Campylobacter jejuni subsp. jejuni serotype O:2 (strain ATCC 700819 / NCTC 11168).